Reading from the N-terminus, the 448-residue chain is Vacuolar amino acid transporter 6 (448 aa).

At Met1–Ser7 the chain is on the cytoplasmic side. The chain crosses the membrane as a helical span at residues Gly8–Phe28. Over Lys29–Gly32 the chain is Vacuolar. The chain crosses the membrane as a helical span at residues Leu33 to Ile53. The Cytoplasmic portion of the chain corresponds to Gln54–Gly80. The chain crosses the membrane as a helical span at residues Ile81–Val101. The Vacuolar segment spans residues Val102–Gln125. Residues Ile126–Leu146 form a helical membrane-spanning segment. At Arg147–Ser150 the chain is on the cytoplasmic side. A helical transmembrane segment spans residues Met151 to Pro171. Over Ser172 to Val195 the chain is Vacuolar. A helical transmembrane segment spans residues Leu196 to Ile216. Topologically, residues Asn217–Lys229 are cytoplasmic. A helical transmembrane segment spans residues Ile230–Tyr250. Over Leu251–Gln267 the chain is Vacuolar. Residues Ala268–Leu288 form a helical membrane-spanning segment. Residues Gln289 to Ser357 lie on the Cytoplasmic side of the membrane. The residue at position 344 (Ser344) is a Phosphoserine. Residues Phe358 to Ser378 form a helical membrane-spanning segment. The Vacuolar portion of the chain corresponds to Leu379–Arg381. The chain crosses the membrane as a helical span at residues Val382–Phe402. The Cytoplasmic segment spans residues Gly403–Tyr424. A helical transmembrane segment spans residues Thr425–Leu445. Topologically, residues Lys446 to Asn448 are vacuolar.

The protein belongs to the amino acid/polyamine transporter 2 family.

It is found in the vacuole membrane. Functionally, involved in amino acid efflux from the vacuole to the cytoplasm. Capable of transporting aspartate and glutamate. Requires ATP for function. In Saccharomyces cerevisiae (strain ATCC 204508 / S288c) (Baker's yeast), this protein is Vacuolar amino acid transporter 6 (AVT6).